The following is a 37-amino-acid chain: Tick defensin 2 (37 aa).

3 cysteine pairs are disulfide-bonded: cysteine 4/cysteine 26, cysteine 11/cysteine 34, and cysteine 15/cysteine 36.

It belongs to the invertebrate defensin family.

It localises to the secreted. In terms of biological role, antibacterial peptide mostly active against Gram-positive bacteria (MIC=0.24 ug/ml on Bacillus subtilis, and MIC=0.94 ug/ml on Micrococcus luteus, MIC&gt;120 ug/ml on both Escherichia coli and Pseudomonas aeruginosa). The chain is Tick defensin 2 from Ornithodoros savignyi (African eyed tampan).